A 206-amino-acid polypeptide reads, in one-letter code: MCDQLAFASQRKPYQHMDLRHHVRDIPDYPKPGILFRDITPLLAHPEALTASVEEMAKPFLDQKIDVVAAAEARGFIFGTPLAMRLNAGFVPIRKPGKLPFDLHSFAYELEYGSDELQIHVDGIKPGQRVLIVDDLLATGGTVEACLRLLEKCDAEIVGCSFLIHLVALGGEARLSPYHVHSVLEYGGDDAEDELSIQNRPPGPSV.

This sequence belongs to the purine/pyrimidine phosphoribosyltransferase family. As to quaternary structure, homodimer.

The protein localises to the cytoplasm. The enzyme catalyses AMP + diphosphate = 5-phospho-alpha-D-ribose 1-diphosphate + adenine. It functions in the pathway purine metabolism; AMP biosynthesis via salvage pathway; AMP from adenine: step 1/1. In terms of biological role, catalyzes a salvage reaction resulting in the formation of AMP, that is energically less costly than de novo synthesis. The chain is Adenine phosphoribosyltransferase from Rhodopirellula baltica (strain DSM 10527 / NCIMB 13988 / SH1).